We begin with the raw amino-acid sequence, 742 residues long: Phosphoribosylformylglycinamidine synthase subunit PurL (742 aa).

The active site involves His53. Residues Tyr56 and Lys95 each contribute to the ATP site. Glu97 lines the Mg(2+) pocket. Residues 98–101 and Arg120 contribute to the substrate site; that span reads SHNH. His99 (proton acceptor) is an active-site residue. Asp121 lines the Mg(2+) pocket. A substrate-binding site is contributed by Gln244. Residue Asp274 participates in Mg(2+) binding. Position 318-320 (318-320) interacts with substrate; it reads ESQ. ATP-binding residues include Asp501 and Gly538. Asn539 is a Mg(2+) binding site. Substrate is bound at residue Ser541.

It belongs to the FGAMS family. In terms of assembly, monomer. Part of the FGAM synthase complex composed of 1 PurL, 1 PurQ and 2 PurS subunits.

The protein resides in the cytoplasm. It carries out the reaction N(2)-formyl-N(1)-(5-phospho-beta-D-ribosyl)glycinamide + L-glutamine + ATP + H2O = 2-formamido-N(1)-(5-O-phospho-beta-D-ribosyl)acetamidine + L-glutamate + ADP + phosphate + H(+). It participates in purine metabolism; IMP biosynthesis via de novo pathway; 5-amino-1-(5-phospho-D-ribosyl)imidazole from N(2)-formyl-N(1)-(5-phospho-D-ribosyl)glycinamide: step 1/2. Part of the phosphoribosylformylglycinamidine synthase complex involved in the purines biosynthetic pathway. Catalyzes the ATP-dependent conversion of formylglycinamide ribonucleotide (FGAR) and glutamine to yield formylglycinamidine ribonucleotide (FGAM) and glutamate. The FGAM synthase complex is composed of three subunits. PurQ produces an ammonia molecule by converting glutamine to glutamate. PurL transfers the ammonia molecule to FGAR to form FGAM in an ATP-dependent manner. PurS interacts with PurQ and PurL and is thought to assist in the transfer of the ammonia molecule from PurQ to PurL. The sequence is that of Phosphoribosylformylglycinamidine synthase subunit PurL from Limosilactobacillus reuteri (strain DSM 20016) (Lactobacillus reuteri).